The chain runs to 279 residues: Proteasome subunit beta (279 aa).

Positions 1-53 (MSGTAEFPGRIPAPYLEVGSSSFVELLGSVAPELLPGRRPLPPGDMGDAAPHG) are cleaved as a propeptide — removed in mature form; by autocatalysis. Residue Thr54 is the Nucleophile of the active site.

The protein belongs to the peptidase T1B family. The 20S proteasome core is composed of 14 alpha and 14 beta subunits that assemble into four stacked heptameric rings, resulting in a barrel-shaped structure. The two inner rings, each composed of seven catalytic beta subunits, are sandwiched by two outer rings, each composed of seven alpha subunits. The catalytic chamber with the active sites is on the inside of the barrel. Has a gated structure, the ends of the cylinder being occluded by the N-termini of the alpha-subunits. Is capped by the proteasome-associated ATPase, ARC.

Its subcellular location is the cytoplasm. It catalyses the reaction Cleavage of peptide bonds with very broad specificity.. Its pathway is protein degradation; proteasomal Pup-dependent pathway. Its activity is regulated as follows. The formation of the proteasomal ATPase ARC-20S proteasome complex, likely via the docking of the C-termini of ARC into the intersubunit pockets in the alpha-rings, may trigger opening of the gate for substrate entry. Interconversion between the open-gate and close-gate conformations leads to a dynamic regulation of the 20S proteasome proteolysis activity. Component of the proteasome core, a large protease complex with broad specificity involved in protein degradation. In Stackebrandtia nassauensis (strain DSM 44728 / CIP 108903 / NRRL B-16338 / NBRC 102104 / LLR-40K-21), this protein is Proteasome subunit beta.